Here is a 297-residue protein sequence, read N- to C-terminus: Homoserine kinase (297 aa).

82 to 92 (PVSRGLGSSAA) lines the ATP pocket.

This sequence belongs to the GHMP kinase family. Homoserine kinase subfamily.

It is found in the cytoplasm. The enzyme catalyses L-homoserine + ATP = O-phospho-L-homoserine + ADP + H(+). Its pathway is amino-acid biosynthesis; L-threonine biosynthesis; L-threonine from L-aspartate: step 4/5. In terms of biological role, catalyzes the ATP-dependent phosphorylation of L-homoserine to L-homoserine phosphate. This Clostridium botulinum (strain ATCC 19397 / Type A) protein is Homoserine kinase.